We begin with the raw amino-acid sequence, 317 residues long: Type II restriction enzyme NaeI (317 aa).

Homodimer.

It carries out the reaction Endonucleolytic cleavage of DNA to give specific double-stranded fragments with terminal 5'-phosphates.. An E and P subtype restriction enzyme that recognizes the double-stranded unmethylated sequence 5'-GCCGGC-3' and cleaves after C-3. This is Type II restriction enzyme NaeI from Lentzea aerocolonigenes (Lechevalieria aerocolonigenes).